The following is a 587-amino-acid chain: V-type proton ATPase catalytic subunit A (587 aa).

243-250 lines the ATP pocket; it reads GAFGCGKT.

It belongs to the ATPase alpha/beta chains family. In terms of assembly, V-ATPase is a heteromultimeric enzyme composed of a peripheral catalytic V1 complex (main components: subunits A, B, C, D, E, and F) attached to an integral membrane V0 proton pore complex (main component: the proteolipid protein).

It catalyses the reaction ATP + H2O + 4 H(+)(in) = ADP + phosphate + 5 H(+)(out). Functionally, catalytic subunit of the peripheral V1 complex of vacuolar ATPase. V-ATPase vacuolar ATPase is responsible for acidifying a variety of intracellular compartments in eukaryotic cells. This chain is V-type proton ATPase catalytic subunit A, found in Cyanidium caldarium (Red alga).